Consider the following 379-residue polypeptide: Serine/threonine-protein kinase spe-6 (379 aa).

Residues 26–302 (WKVLRNIYSG…SQAATEHQVT (277 aa)) enclose the Protein kinase domain. ATP is bound by residues 32–40 (IYSGPFSDV) and lysine 55. The Proton acceptor role is filled by aspartate 147. The disordered stretch occupies residues 331-379 (ASAKLDAKDNANESMDIEFDDMPPKEGISKSLSAEKSCTKNVETARTEK). Residues 360–372 (KSLSAEKSCTKNV) show a composition bias toward polar residues.

This sequence belongs to the protein kinase superfamily. CK1 Ser/Thr protein kinase family.

It carries out the reaction L-seryl-[protein] + ATP = O-phospho-L-seryl-[protein] + ADP + H(+). It catalyses the reaction L-threonyl-[protein] + ATP = O-phospho-L-threonyl-[protein] + ADP + H(+). Its function is as follows. Serine/threonine-protein kinase which is involved in spermatogenesis. In spermatocytes, regulates meiosis and the localization and assembly of major sperm protein (MSP) into fibrous bodies. In addition, may suppress the initiation of spermiogenesis downstream of spe-8, spe-12, spe-27 and spe-29. The polypeptide is Serine/threonine-protein kinase spe-6 (Caenorhabditis elegans).